Here is a 138-residue protein sequence, read N- to C-terminus: Large ribosomal subunit protein uL16 (138 aa).

A compositionally biased stretch (basic residues) spans 1–13 (MLQPARRKFRKEQ). The segment at 1–22 (MLQPARRKFRKEQKGRNTGVAT) is disordered.

Belongs to the universal ribosomal protein uL16 family. In terms of assembly, part of the 50S ribosomal subunit.

Binds 23S rRNA and is also seen to make contacts with the A and possibly P site tRNAs. This is Large ribosomal subunit protein uL16 from Acidovorax ebreus (strain TPSY) (Diaphorobacter sp. (strain TPSY)).